Here is a 589-residue protein sequence, read N- to C-terminus: Probable translation initiation factor IF-2 (589 aa).

Residues 5-219 (IRTPIVCVLG…IMIGLAQRYL (215 aa)) enclose the tr-type G domain. A G1 region spans residues 14–21 (GHVDHGKT). 14–21 (GHVDHGKT) provides a ligand contact to GTP. The G2 stretch occupies residues 39-43 (AITQH). Residues 75–78 (DTPG) are G3. GTP-binding positions include 75 to 79 (DTPGH) and 129 to 132 (TKLD). The interval 129–132 (TKLD) is G4. Positions 197–199 (SSM) are G5.

The protein belongs to the TRAFAC class translation factor GTPase superfamily. Classic translation factor GTPase family. IF-2 subfamily.

Its function is as follows. Function in general translation initiation by promoting the binding of the formylmethionine-tRNA to ribosomes. Seems to function along with eIF-2. The protein is Probable translation initiation factor IF-2 of Methanocorpusculum labreanum (strain ATCC 43576 / DSM 4855 / Z).